The following is a 228-amino-acid chain: UPF0758 protein CLK_2387 (228 aa).

An MPN domain is found at 106–228 (KISTPLDVSN…YVSMKEKGTI (123 aa)). Residues His-177, His-179, and Asp-190 each coordinate Zn(2+). Positions 177–190 (HNHPSGDPTPSKED) match the JAMM motif motif.

The protein belongs to the UPF0758 family.

The protein is UPF0758 protein CLK_2387 of Clostridium botulinum (strain Loch Maree / Type A3).